We begin with the raw amino-acid sequence, 209 residues long: Uracil phosphoribosyltransferase (209 aa).

Residues Arg-79, Arg-104, and 131-139 contribute to the 5-phospho-alpha-D-ribose 1-diphosphate site; that span reads DPMLATGGS. Uracil is bound by residues Ile-194 and 199–201; that span reads GDA. Asp-200 serves as a coordination point for 5-phospho-alpha-D-ribose 1-diphosphate.

Belongs to the UPRTase family. The cofactor is Mg(2+).

It catalyses the reaction UMP + diphosphate = 5-phospho-alpha-D-ribose 1-diphosphate + uracil. It participates in pyrimidine metabolism; UMP biosynthesis via salvage pathway; UMP from uracil: step 1/1. Allosterically activated by GTP. Catalyzes the conversion of uracil and 5-phospho-alpha-D-ribose 1-diphosphate (PRPP) to UMP and diphosphate. The chain is Uracil phosphoribosyltransferase from Anoxybacillus flavithermus (strain DSM 21510 / WK1).